The sequence spans 1048 residues: Cysteine-rich motor neuron 1 protein (1048 aa).

Residues 1–46 (MYLAAVSAGRRRPGGDGGGGGGGWHLAAAGWLLLLALLLGQPGTRA) form the signal peptide. One can recognise an IGFBP N-terminal domain in the interval 47 to 124 (LVCLPCDESK…EYEVGVCEDE (78 aa)). The Extracellular portion of the chain corresponds to 47–952 (LVCLPCDESK…HPSEDASVSS (906 aa)). 4 disulfides stabilise this stretch: C49–C72, C52–C74, C57–C75, and C63–C78. N83 carries an N-linked (GlcNAc...) asparagine glycan. 2 cysteine pairs are disulfide-bonded: C86–C102 and C96–C121. Residues 326 to 328 (RGD) carry the Cell attachment site motif. VWFC domains lie at 346–403 (PTCI…PVCE) and 413–469 (AGCY…PVCE). Antistasin-like domains follow at residues 481–510 (CELL…ICQC), 517–544 (CTGL…ICQC), 551–576 (CKPI…ICRC), and 579–604 (CPEM…ICKC). The N-linked (GlcNAc...) asparagine glycan is linked to N486. VWFC domains are found at residues 618–675 (GSCL…PSCP) and 689–747 (SICH…PQCP). A glycan (N-linked (GlcNAc...) asparagine) is linked at N758. VWFC domains follow at residues 763-821 (SYCK…PYCI) and 829-886 (VVCH…PMCP). A Cell attachment site motif is present at residues 904-906 (RGD). N-linked (GlcNAc...) asparagine glycosylation occurs at N913. Residues 953 to 973 (VALVTVPITIALLVIIVFLLI) form a helical membrane-spanning segment. Residues 974 to 1048 (NQKKQWIPVS…LQADNFYQTV (75 aa)) lie on the Cytoplasmic side of the membrane.

The protein resides in the membrane. Its function is as follows. May play a role in CNS development by interacting with growth factors implicated in motor neuron differentiation and survival. In Gallus gallus (Chicken), this protein is Cysteine-rich motor neuron 1 protein (CRIM1).